Here is a 131-residue protein sequence, read N- to C-terminus: MAGIKALISLSFGGAIGLMFLMLGCALPIYNKYWPLFVLFFYILSPIPYCIARRLVDDTDAMSNACKELAIFLTTGIVVSAFGLPIVFARAHLIEWGACALVLTGNTVIFATILGFFLVFGSNDDFSWQQW.

4 helical membrane passes run 7-27 (LISLSFGGAIGLMFLMLGCAL), 32-52 (KYWPLFVLFFYILSPIPYCIA), 69-89 (LAIFLTTGIVVSAFGLPIVFA), and 100-120 (ALVLTGNTVIFATILGFFLVF).

Belongs to the OB-RGRP/VPS55 family. As to quaternary structure, interacts with RAB13. In terms of tissue distribution, widely expressed, with highest expression in heart, testis, adrenal gland, thymus, and spleen, and lowest expression in lung and skeletal muscle.

It is found in the membrane. Functionally, negatively regulates growth hormone (GH) receptor cell surface expression in liver. May play a role in liver resistance to GH during periods of reduced nutrient availability. In Homo sapiens (Human), this protein is Leptin receptor overlapping transcript-like 1 (LEPROTL1).